Reading from the N-terminus, the 280-residue chain is Ribosomal RNA small subunit methyltransferase A (280 aa).

Residues Asn28, Leu30, Gly55, Glu77, Asp103, and Asn122 each coordinate S-adenosyl-L-methionine.

This sequence belongs to the class I-like SAM-binding methyltransferase superfamily. rRNA adenine N(6)-methyltransferase family. RsmA subfamily.

Its subcellular location is the cytoplasm. The catalysed reaction is adenosine(1518)/adenosine(1519) in 16S rRNA + 4 S-adenosyl-L-methionine = N(6)-dimethyladenosine(1518)/N(6)-dimethyladenosine(1519) in 16S rRNA + 4 S-adenosyl-L-homocysteine + 4 H(+). Specifically dimethylates two adjacent adenosines (A1518 and A1519) in the loop of a conserved hairpin near the 3'-end of 16S rRNA in the 30S particle. May play a critical role in biogenesis of 30S subunits. This is Ribosomal RNA small subunit methyltransferase A from Ruegeria sp. (strain TM1040) (Silicibacter sp.).